A 275-amino-acid chain; its full sequence is Testis-specific gene 13 protein (275 aa).

Over residues 1 to 20 (MSQKRQTKFQNGKSKTSENS) the composition is skewed to polar residues. Residues 1–28 (MSQKRQTKFQNGKSKTSENSSAKREKGM) are disordered.

Testis-specific.

This is Testis-specific gene 13 protein (TSGA13) from Homo sapiens (Human).